The primary structure comprises 459 residues: Chromosomal replication initiator protein DnaA (459 aa).

The interval 1–73 is domain I, interacts with DnaA modulators; sequence MEIPIESLWS…AHAVQDILGH (73 aa). The domain II stretch occupies residues 73–117; that stretch reads HPVGIYITVAQGDEVSHFSEREVSWESTNPSSIPESLPHHNHKTT. The domain III, AAA+ region stretch occupies residues 118-334; the sequence is ELNSKYVFSR…GALIRAVAYI (217 aa). Residues G162, G164, K165, and T166 each contribute to the ATP site. Positions 335 to 459 are domain IV, binds dsDNA; the sequence is SIWGLPMTVE…INMTSRSQKS (125 aa).

Belongs to the DnaA family. As to quaternary structure, oligomerizes as a right-handed, spiral filament on DNA at oriC.

It localises to the cytoplasm. In terms of biological role, plays an essential role in the initiation and regulation of chromosomal replication. ATP-DnaA binds to the origin of replication (oriC) to initiate formation of the DNA replication initiation complex once per cell cycle. Binds the DnaA box (a 9 base pair repeat at the origin) and separates the double-stranded (ds)DNA. Forms a right-handed helical filament on oriC DNA; dsDNA binds to the exterior of the filament while single-stranded (ss)DNA is stabiized in the filament's interior. The ATP-DnaA-oriC complex binds and stabilizes one strand of the AT-rich DNA unwinding element (DUE), permitting loading of DNA polymerase. After initiation quickly degrades to an ADP-DnaA complex that is not apt for DNA replication. Binds acidic phospholipids. This is Chromosomal replication initiator protein DnaA from Nostoc punctiforme (strain ATCC 29133 / PCC 73102).